The sequence spans 905 residues: Protein translocase subunit SecA (905 aa).

ATP is bound by residues glutamine 87, 105–109 (GEGKT), and aspartate 509. Cysteine 890, cysteine 892, cysteine 901, and histidine 902 together coordinate Zn(2+).

This sequence belongs to the SecA family. Monomer and homodimer. Part of the essential Sec protein translocation apparatus which comprises SecA, SecYEG and auxiliary proteins SecDF-YajC and YidC. Zn(2+) serves as cofactor.

It is found in the cell inner membrane. The protein resides in the cytoplasm. The enzyme catalyses ATP + H2O + cellular proteinSide 1 = ADP + phosphate + cellular proteinSide 2.. Its function is as follows. Part of the Sec protein translocase complex. Interacts with the SecYEG preprotein conducting channel. Has a central role in coupling the hydrolysis of ATP to the transfer of proteins into and across the cell membrane, serving both as a receptor for the preprotein-SecB complex and as an ATP-driven molecular motor driving the stepwise translocation of polypeptide chains across the membrane. The chain is Protein translocase subunit SecA from Acinetobacter baylyi (strain ATCC 33305 / BD413 / ADP1).